The sequence spans 94 residues: Conotoxin Gla-MrII (94 aa).

Residues 1-25 form the signal peptide; sequence MFGHTSVSFLLLSIVALGMVATVIC. 4-carboxyglutamate is present on residues glutamate 30, glutamate 34, glutamate 37, glutamate 40, and glutamate 41. Positions 78 to 94 are excised as a propeptide; it reads STHMQKRFLRMPRDLAD.

The protein belongs to the conotoxin I2 superfamily. Post-translationally, contains 4 disulfide bonds. As to expression, expressed by the venom duct.

Its subcellular location is the secreted. This chain is Conotoxin Gla-MrII, found in Conus marmoreus (Marble cone).